The following is a 1853-amino-acid chain: DNA-directed RNA polymerase II subunit RPB1 (1853 aa).

Residues cysteine 66, cysteine 69, cysteine 76, histidine 79, cysteine 106, cysteine 109, cysteine 149, and cysteine 177 each contribute to the Zn(2+) site. Residues 256 to 268 (PAVVTFGSAKNQD) are lid loop. The interval 314–331 (NCIPGLPTATQKGGRPLK) is rudder loop. The Mg(2+) site is built by aspartate 489, aspartate 491, and aspartate 493. A bridging helix region spans residues 827-839 (PSEFFFHAMGGRE). Residue lysine 1260 forms a Glycyl lysine isopeptide (Lys-Gly) (interchain with G-Cter in ubiquitin) linkage. Disordered stretches follow at residues 1520–1568 (PWSP…PRTP) and 1589–1853 (SPHY…DPQN). 2 stretches are compositionally biased toward low complexity: residues 1589–1811 (SPHY…TPSP) and 1821–1853 (YSPS…DPQN). A run of 26 repeats spans residues 1592-1598 (YSPTSPS), 1599-1605 (YSPTSPA), 1616-1622 (YSPTSPS), 1623-1629 (YSPTSPS), 1630-1636 (YSPTSPS), 1637-1643 (YSPTSPS), 1644-1650 (YSPTSPS), 1651-1657 (YSPTSPS), 1658-1664 (YSPTSPS), 1665-1671 (YSPTSPS), 1679-1685 (YSPTSPT), 1686-1692 (YSPTSPT), 1693-1699 (YSPTSPT), 1700-1706 (YSPTSPT), 1707-1713 (YSPTSPS), 1717-1723 (YSPSSPK), 1724-1730 (YSPSSPT), 1731-1737 (YSPTSPS), 1752-1758 (YSPSSPT), 1759-1765 (YTPSSPT), 1779-1785 (YSPTSPT), 1786-1792 (YSPTSPS), 1800-1806 (YSPTSPT), 1821-1827 (YSPSSPT), 1828-1834 (YSPSSPT), and 1842-1848 (YSPSSPT). The interval 1592–1848 (YSPTSPSYSP…SPSYSPSSPT (257 aa)) is C-terminal domain (CTD); 26 X 7 AA approximate tandem repeats of Y-[ST]-P-[ST]-S-P-[AGKNQRST].

The protein belongs to the RNA polymerase beta' chain family. Component of the RNA polymerase II (Pol II) complex consisting of 12 subunits. Interacts with sig-7. In terms of processing, the tandem 7 residues repeats in the C-terminal domain (CTD) can be highly phosphorylated. The phosphorylation activates Pol II. Phosphorylation occurs mainly at residues 'Ser-2' and 'Ser-5' of the heptapeptide repeat and starts at the 3- to 4-cell embryonic stage. This phosphorylation also occurs in the early stages of oocyte development and is not detected in oocytes arrested at the meiotic diakinesis stage. In the somatic lineage, phosphorylation at 'Ser-2' is mediated by cdk-12 downstream of cdk-9 whereas in the germline lineage cdk-12 phosphorylates 'Ser-2' independently of cdk-9. Phosphorylation is likely mediated by cdk-7. May be dephosphorylated by fcp-1 in diakinetic oocytes and in 1-cell and 2-cell embryos. Dephosphorylated at 'Ser-5' of the heptapeptide repeat by ssup-72. The phosphorylation state is believed to result from the balanced action of site-specific CTD kinases and phosphatase, and a 'CTD code' that specifies the position of Pol II within the transcription cycle has been proposed. Following transcription stress, the elongating form of RNA polymerase II (RNA pol IIo) is polyubiquitinated via 'Lys-63'-linkages on Lys-1260 at DNA damage sites without leading to degradation: ubiquitination promotes RNA pol IIo backtracking to allow access by the transcription-coupled nucleotide excision repair (TC-NER) machinery. Subsequent DEF1-dependent polyubiquitination by the elongin complex via 'Lys-48'-linkages may lead to proteasome-mediated degradation; presumably at stalled RNA pol II where TC-NER has failed, to halt global transcription and enable 'last resort' DNA repair pathways.

It localises to the nucleus. Its subcellular location is the chromosome. The enzyme catalyses RNA(n) + a ribonucleoside 5'-triphosphate = RNA(n+1) + diphosphate. Functionally, DNA-dependent RNA polymerase catalyzes the transcription of DNA into RNA using the four ribonucleoside triphosphates as substrates. Largest and catalytic component of RNA polymerase II which synthesizes mRNA precursors and many functional non-coding RNAs. Forms the polymerase active center together with the second largest subunit. Pol II is the central component of the basal RNA polymerase II transcription machinery. It is composed of mobile elements that move relative to each other. RPB1 is part of the core element with the central large cleft, the clamp element that moves to open and close the cleft and the jaws that are thought to grab the incoming DNA template. At the start of transcription, a single-stranded DNA template strand of the promoter is positioned within the central active site cleft of Pol II. A bridging helix emanates from RPB1 and crosses the cleft near the catalytic site and is thought to promote translocation of Pol II by acting as a ratchet that moves the RNA-DNA hybrid through the active site by switching from straight to bent conformations at each step of nucleotide addition. During transcription elongation, Pol II moves on the template as the transcript elongates. Elongation is influenced by the phosphorylation status of the C-terminal domain (CTD) of Pol II largest subunit (RPB1), which serves as a platform for assembly of factors that regulate transcription initiation, elongation, termination and mRNA processing. Involved in the transcription of several genes including those involved in embryogenesis. In Caenorhabditis briggsae, this protein is DNA-directed RNA polymerase II subunit RPB1.